The primary structure comprises 65 residues: Large ribosomal subunit protein bL35 (65 aa).

The span at 1–16 shows a compositional bias: basic residues; the sequence is MPKQKTHRASAKRFKR. Positions 1–20 are disordered; that stretch reads MPKQKTHRASAKRFKRTGSG.

This sequence belongs to the bacterial ribosomal protein bL35 family.

The chain is Large ribosomal subunit protein bL35 from Streptococcus pyogenes serotype M1.